The primary structure comprises 339 residues: Uroporphyrinogen decarboxylase (339 aa).

Substrate-binding positions include 23–27 (RQAGR), Asp72, Tyr147, Thr202, and His315.

This sequence belongs to the uroporphyrinogen decarboxylase family. In terms of assembly, homodimer.

The protein localises to the cytoplasm. It carries out the reaction uroporphyrinogen III + 4 H(+) = coproporphyrinogen III + 4 CO2. The protein operates within porphyrin-containing compound metabolism; protoporphyrin-IX biosynthesis; coproporphyrinogen-III from 5-aminolevulinate: step 4/4. Catalyzes the decarboxylation of four acetate groups of uroporphyrinogen-III to yield coproporphyrinogen-III. The chain is Uroporphyrinogen decarboxylase from Citrifermentans bemidjiense (strain ATCC BAA-1014 / DSM 16622 / JCM 12645 / Bem) (Geobacter bemidjiensis).